A 123-amino-acid chain; its full sequence is Probable ketoamine kinase in tonB 3'region (123 aa).

The active-site Proton acceptor is aspartate 26.

Belongs to the fructosamine kinase family.

Its function is as follows. Ketoamine kinase that phosphorylates ketoamines on the third carbon of the sugar moiety to generate ketoamine 3-phosphate. The protein is Probable ketoamine kinase in tonB 3'region of Klebsiella pneumoniae.